We begin with the raw amino-acid sequence, 1937 residues long: Collagen-like protein 7 (1937 aa).

2 N-linked (GlcNAc...) asparagine; by host glycosylation sites follow: asparagine 6 and asparagine 21. Disordered stretches follow at residues 88–248 (CKGN…KGDK), 294–531 (NLKG…PDLG), 583–643 (LKGD…NQGV), and 670–1144 (IKGD…DTAT). Collagen-like domains lie at 102–161 (GPKG…KGEK), 168–227 (GEKG…KGDI), 297–356 (GEKG…KGEK), 363–422 (GDKG…IGEK), and 453–512 (GDKG…KGDK). Positions 296-514 (KGEKGDKGNK…DKGDKGDKGD (219 aa)) are enriched in basic and acidic residues. N-linked (GlcNAc...) asparagine; by host glycosylation occurs at asparagine 515. Composition is skewed to basic and acidic residues over residues 584–605 (KGDKGDKGINGNKGDKGEKGDK), 614–625 (KGEKGDKGDKGD), and 670–899 (IKGD…KGDK). Collagen-like domains lie at 672-731 (GDKG…KGDK), 735-854 (GNKG…KGNI), 867-926 (GLKG…KGDK), 936-995 (GIKG…KGDK), and 1023-1142 (GSKG…KGDT). A glycan (N-linked (GlcNAc...) asparagine; by host) is linked at asparagine 902. Residues 907–1141 (YKGDKGDKGS…DKGDKGDKGD (235 aa)) show a composition bias toward basic and acidic residues. Asparagine 1178, asparagine 1192, asparagine 1212, asparagine 1217, asparagine 1245, asparagine 1246, asparagine 1255, asparagine 1317, asparagine 1422, asparagine 1427, asparagine 1432, asparagine 1443, asparagine 1452, asparagine 1477, asparagine 1494, asparagine 1506, asparagine 1513, asparagine 1533, asparagine 1598, asparagine 1619, asparagine 1620, asparagine 1632, asparagine 1641, asparagine 1663, asparagine 1664, asparagine 1672, asparagine 1682, asparagine 1683, asparagine 1732, asparagine 1735, asparagine 1746, asparagine 1756, asparagine 1784, asparagine 1842, and asparagine 1934 each carry an N-linked (GlcNAc...) asparagine; by host glycan.

Post-translationally, may be hydroxylated on lysine by the viral-encoded procollagen-lysine,2-oxoglutarate 5-dioxygenase.

Its subcellular location is the virion. May participate in the formation of a layer of cross-linked glycosylated fibrils at the viral surface thus giving it a hairy-like appearance. This chain is Collagen-like protein 7, found in Acanthamoeba polyphaga mimivirus (APMV).